The chain runs to 324 residues: Leucine carboxyl methyltransferase 1 (324 aa).

Residues arginine 74, glycine 101, aspartate 128, 172–173 (DL), and glutamate 196 each bind S-adenosyl-L-methionine.

Belongs to the methyltransferase superfamily. LCMT family.

It carries out the reaction [phosphatase 2A protein]-C-terminal L-leucine + S-adenosyl-L-methionine = [phosphatase 2A protein]-C-terminal L-leucine methyl ester + S-adenosyl-L-homocysteine. In terms of biological role, methylates the carboxyl group of the C-terminal leucine residue of protein phosphatase 2A catalytic subunits to form alpha-leucine ester residues. The polypeptide is Leucine carboxyl methyltransferase 1 (PPM1) (Yarrowia lipolytica (strain CLIB 122 / E 150) (Yeast)).